The sequence spans 543 residues: DM7 family protein GG19680 (543 aa).

Residues 415–430 (GETQEMDEAHPTKEES) are compositionally biased toward basic and acidic residues. The segment at 415–443 (GETQEMDEAHPTKEESKSEEEGEVQSGSQ) is disordered.

It belongs to the DM7 family.

This is DM7 family protein GG19680 from Drosophila erecta (Fruit fly).